A 437-amino-acid polypeptide reads, in one-letter code: Phosphomethylpyrimidine synthase (437 aa).

Substrate contacts are provided by residues Asn69, Met98, Tyr127, His163, 185 to 187 (SRG), 226 to 229 (DACR), and Glu265. His269 is a binding site for Zn(2+). Position 292 (Tyr292) interacts with substrate. His333 lines the Zn(2+) pocket. The [4Fe-4S] cluster site is built by Cys409, Cys412, and Cys416.

It belongs to the ThiC family. Requires [4Fe-4S] cluster as cofactor.

It carries out the reaction 5-amino-1-(5-phospho-beta-D-ribosyl)imidazole + S-adenosyl-L-methionine = 4-amino-2-methyl-5-(phosphooxymethyl)pyrimidine + CO + 5'-deoxyadenosine + formate + L-methionine + 3 H(+). It participates in cofactor biosynthesis; thiamine diphosphate biosynthesis. Functionally, catalyzes the synthesis of the hydroxymethylpyrimidine phosphate (HMP-P) moiety of thiamine from aminoimidazole ribotide (AIR) in a radical S-adenosyl-L-methionine (SAM)-dependent reaction. This chain is Phosphomethylpyrimidine synthase, found in Clostridium botulinum (strain Langeland / NCTC 10281 / Type F).